The chain runs to 358 residues: Cyanide hydratase (358 aa).

The CN hydrolase domain maps to Tyr-8–Leu-287. The active-site Proton acceptor is Glu-48. Lys-130 is a catalytic residue. The active-site Nucleophile is the Cys-165.

This sequence belongs to the carbon-nitrogen hydrolase superfamily. Nitrilase family. As to quaternary structure, oligomer of dimers, forming left-handed helical fibers.

It catalyses the reaction formamide = hydrogen cyanide + H2O. Functionally, catalyzes the hydration of cyanide to formamide. Degradation of cyanide may be important for plant pathogenic fungi in infection of cyanogenic plants. The sequence is that of Cyanide hydratase from Penicillium rubens (strain ATCC 28089 / DSM 1075 / NRRL 1951 / Wisconsin 54-1255) (Penicillium chrysogenum).